The following is a 335-amino-acid chain: Ferrochelatase (335 aa).

The Fe cation site is built by His-207 and Glu-288.

The protein belongs to the ferrochelatase family.

It is found in the cytoplasm. It catalyses the reaction heme b + 2 H(+) = protoporphyrin IX + Fe(2+). It functions in the pathway porphyrin-containing compound metabolism; protoheme biosynthesis; protoheme from protoporphyrin-IX: step 1/1. In terms of biological role, catalyzes the ferrous insertion into protoporphyrin IX. The protein is Ferrochelatase of Helicobacter pylori (strain J99 / ATCC 700824) (Campylobacter pylori J99).